The chain runs to 651 residues: NADH oxidase (651 aa).

Gln-104 lines the FMN pocket. The active-site Proton donor is Tyr-175. FMN contacts are provided by residues Arg-223 and 320–321; that span reads GR. Positions 344, 347, 351, and 364 each coordinate [4Fe-4S] cluster. Positions 396, 415, 423, 433, and 460 each coordinate FAD.

It in the N-terminal section; belongs to the NADH:flavin oxidoreductase/NADH oxidase family. As to quaternary structure, homohexamer. Requires FMN as cofactor. The cofactor is FAD. [4Fe-4S] cluster serves as cofactor. Post-translationally, the N-terminus is blocked.

It carries out the reaction A + NADH + H(+) = AH2 + NAD(+). In terms of biological role, reduces a range of alternative electron acceptors. The sequence is that of NADH oxidase from Thermoanaerobacter brockii (Thermoanaerobium brockii).